A 443-amino-acid chain; its full sequence is Phosphoglucosamine mutase (443 aa).

Catalysis depends on serine 100, which acts as the Phosphoserine intermediate. Residues serine 100, aspartate 239, aspartate 241, and aspartate 243 each coordinate Mg(2+). Serine 100 is modified (phosphoserine).

Belongs to the phosphohexose mutase family. The cofactor is Mg(2+). Post-translationally, activated by phosphorylation.

It catalyses the reaction alpha-D-glucosamine 1-phosphate = D-glucosamine 6-phosphate. Its function is as follows. Catalyzes the conversion of glucosamine-6-phosphate to glucosamine-1-phosphate. This is Phosphoglucosamine mutase from Shewanella loihica (strain ATCC BAA-1088 / PV-4).